The sequence spans 500 residues: Cytochrome P450 2D26 (500 aa).

Ser-249 bears the Phosphoserine mark. Cys-446 contacts heme.

Belongs to the cytochrome P450 family. Heme serves as cofactor.

It localises to the endoplasmic reticulum membrane. The protein localises to the microsome membrane. It carries out the reaction an organic molecule + reduced [NADPH--hemoprotein reductase] + O2 = an alcohol + oxidized [NADPH--hemoprotein reductase] + H2O + H(+). Functionally, cytochromes P450 are a group of heme-thiolate monooxygenases. In liver microsomes, this enzyme is involved in an NADPH-dependent electron transport pathway. It oxidizes a variety of structurally unrelated compounds, including steroids, fatty acids, and xenobiotics. The protein is Cytochrome P450 2D26 of Mus musculus (Mouse).